Consider the following 150-residue polypeptide: Cdc42 effector protein 5 (150 aa).

3 disordered regions span residues 1-20 (MPVMKQLGPAQPKKRLDRGA), 34-89 (LHVG…PADP), and 114-133 (SETTATKPDGDAHPRVQHPK). The CRIB domain maps to 23–37 (ISAPLGDFRHTLHVG). Position 38 is an omega-N-methylarginine (arginine 38). Composition is skewed to pro residues over residues 55-66 (GPPPEPGAPPVV) and 74-87 (PAAPQPPVAVPSPA). Positions 114–127 (SETTATKPDGDAHP) are enriched in basic and acidic residues.

Belongs to the BORG/CEP family. As to quaternary structure, interacts with CDC42 in a GTP-dependent manner, and with SEPT7. In terms of tissue distribution, highly expressed in the skeletal muscle.

It localises to the endomembrane system. It is found in the cytoplasm. The protein localises to the cytoskeleton. In terms of biological role, probably involved in the organization of the actin cytoskeleton. May act downstream of CDC42 to induce actin filament assembly leading to cell shape changes. Induces pseudopodia formation in fibroblasts. Inhibits MAPK8 independently of CDC42 binding. Controls septin organization and this effect is negatively regulated by CDC42. This is Cdc42 effector protein 5 (Cdc42ep5) from Mus musculus (Mouse).